The sequence spans 67 residues: LPS-assembly lipoprotein LptM (67 aa).

The N-terminal stretch at 1–19 is a signal peptide; sequence MKNVFKTLAVLLTLFSLTG. Cys-20 carries N-palmitoyl cysteine lipidation. Cys-20 carries S-diacylglycerol cysteine lipidation. Positions 26 to 67 are disordered; the sequence is LYFPPADKNAPPPTKKVDSQTQSTMPDKNDRATGDGPSQVNY.

This sequence belongs to the LptM family. As to quaternary structure, interacts with the outer membrane embedded portion of the LPS translocon formed by LptD and LptE (LptDE).

It localises to the cell outer membrane. Functionally, component of the lipopolysaccharide (LPS) transport (Lpt) pathway that promotes efficient assembly of the outer membrane LPS translocon (LptDE) by the BAM complex. Facilitates oxidative maturation of LptD by stabilizing a conformation of the LPS translocon in which LptD can efficiently acquire native disulfide bonds, thereby activating the LPS translocon. In Salmonella typhi, this protein is LPS-assembly lipoprotein LptM.